Here is a 249-residue protein sequence, read N- to C-terminus: Small ribosomal subunit protein uS3 (249 aa).

A KH type-2 domain is found at 39–107 (VRAMLKKRLY…EVHLNIVEIR (69 aa)). The disordered stretch occupies residues 215 to 249 (LDKRLATESGPAGEGGGRERGDRPDRGDRGRRDRG). The span at 230 to 249 (GGRERGDRPDRGDRGRRDRG) shows a compositional bias: basic and acidic residues.

It belongs to the universal ribosomal protein uS3 family. In terms of assembly, part of the 30S ribosomal subunit. Forms a tight complex with proteins S10 and S14.

In terms of biological role, binds the lower part of the 30S subunit head. Binds mRNA in the 70S ribosome, positioning it for translation. The chain is Small ribosomal subunit protein uS3 from Caulobacter sp. (strain K31).